The sequence spans 199 residues: NAD(P)H dehydrogenase (quinone) (199 aa).

The Flavodoxin-like domain maps to 4–190 (VLVLYYSAYG…EAAKYQGAHV (187 aa)). Residues 10–15 (SAYGHI) and 78–80 (TRF) each bind FMN. Y12 lines the NAD(+) pocket. W98 serves as a coordination point for substrate. FMN is bound by residues 113–119 (SSATQHG) and H134.

It belongs to the WrbA family. FMN is required as a cofactor.

It catalyses the reaction a quinone + NADH + H(+) = a quinol + NAD(+). The catalysed reaction is a quinone + NADPH + H(+) = a quinol + NADP(+). This Rhizobium rhizogenes (strain K84 / ATCC BAA-868) (Agrobacterium radiobacter) protein is NAD(P)H dehydrogenase (quinone).